A 617-amino-acid polypeptide reads, in one-letter code: MAASETVLRVPLGSVSQSCYLASFFVNSTPNLSFKPVSRNRKTVRCTNSHEVSSVPKHSFHSSNSVLKGKKFVSTICKCQKHDVEESIRSTLLPSDGLSSELKSDLDEMPLPVNGSVSSNGNAQSVGTKSIEDEAWDLLRQSVVFYCGSPIGTIAANDPNSTSVLNYDQVFIRDFIPSGIAFLLKGEYDIVRNFILYTLQLQSWEKTMDCHSPGQGLMPCSFKVKTVPLDGDDSMTEEVLDPDFGEAAIGRVAPVDSGLWWIILLRAYGKCTGDLSVQERVDVQTGIKMILKLCLADGFDMFPTLLVTDGSCMIDRRMGIHGHPLEIQALFYSALVCAREMLTPEDGSADLIRALNNRLVALNFHIREYYWLDLKKINEIYRYQTEEYSYDAVNKFNIYPDQIPSWLVDFMPNRGGYLIGNLQPAHMDFRFFTLGNLWSIVSSLASNDQSHAILDFIEAKWAELVADMPLKICYPAMEGEEWRIITGSDPKNTPWSYHNGGAWPTLLWQLTVASIKMGRPEIAEKAVELAERRISLDKWPEYYDTKRARFIGKQARLYQTWSIAGYLVAKLLLANPAAAKFLTSEEDSDLRNAFSCMLSANPRRTRGPKKAQQPFIV.

A chloroplast-targeting transit peptide spans 1-45 (MAASETVLRVPLGSVSQSCYLASFFVNSTPNLSFKPVSRNRKTVR). S87 bears the Phosphoserine mark.

Belongs to the glycosyl hydrolase 100 family. In terms of tissue distribution, expressed in roots, leaves and flowers.

The protein resides in the plastid. The protein localises to the chloroplast. The catalysed reaction is Hydrolysis of terminal non-reducing beta-D-fructofuranoside residues in beta-D-fructofuranosides.. Its function is as follows. Chloroplastic invertase that cleaves sucrose into glucose and fructose and is associated with the development of the photosynthetic apparatus and the assimilation of nitrogen in seedlings to control the sucrose to hexose ratio. Participates in the carbon flux between the cytosol and plastids in leaves. This is Alkaline/neutral invertase E, chloroplastic from Arabidopsis thaliana (Mouse-ear cress).